The chain runs to 99 residues: Small ribosomal subunit protein bS6 (99 aa).

Belongs to the bacterial ribosomal protein bS6 family.

Its function is as follows. Binds together with bS18 to 16S ribosomal RNA. The sequence is that of Small ribosomal subunit protein bS6 from Lactiplantibacillus plantarum (strain ATCC BAA-793 / NCIMB 8826 / WCFS1) (Lactobacillus plantarum).